Reading from the N-terminus, the 205-residue chain is Pyridoxal 5'-phosphate synthase subunit PdxT (205 aa).

53–55 provides a ligand contact to L-glutamine; it reads GES. C85 functions as the Nucleophile in the catalytic mechanism. L-glutamine is bound by residues R112 and 140–141; that span reads IR. Catalysis depends on charge relay system residues H176 and E178.

This sequence belongs to the glutaminase PdxT/SNO family. In the presence of PdxS, forms a dodecamer of heterodimers. Only shows activity in the heterodimer.

The catalysed reaction is aldehydo-D-ribose 5-phosphate + D-glyceraldehyde 3-phosphate + L-glutamine = pyridoxal 5'-phosphate + L-glutamate + phosphate + 3 H2O + H(+). The enzyme catalyses L-glutamine + H2O = L-glutamate + NH4(+). The protein operates within cofactor biosynthesis; pyridoxal 5'-phosphate biosynthesis. Functionally, catalyzes the hydrolysis of glutamine to glutamate and ammonia as part of the biosynthesis of pyridoxal 5'-phosphate. The resulting ammonia molecule is channeled to the active site of PdxS. The polypeptide is Pyridoxal 5'-phosphate synthase subunit PdxT (Haloquadratum walsbyi (strain DSM 16790 / HBSQ001)).